The sequence spans 166 residues: Ribosome maturation factor RimP (166 aa).

This sequence belongs to the RimP family.

The protein resides in the cytoplasm. In terms of biological role, required for maturation of 30S ribosomal subunits. The polypeptide is Ribosome maturation factor RimP (Rickettsia akari (strain Hartford)).